A 206-amino-acid chain; its full sequence is Cytochrome c oxidase assembly protein CtaG (206 aa).

Residues 1–22 (MTEQPTNRNDVPRRGLGRDATV) are Cytoplasmic-facing. The chain crosses the membrane as a helical; Signal-anchor for type II membrane protein span at residues 23 to 43 (ASICGLVVALMVGASYAAVPF). Topologically, residues 44–206 (YNWFCRATGF…GEPDSRKGAL (163 aa)) are periplasmic.

This sequence belongs to the COX11/CtaG family.

Its subcellular location is the cell inner membrane. In terms of biological role, exerts its effect at some terminal stage of cytochrome c oxidase synthesis, probably by being involved in the insertion of the copper B into subunit I. This Rhodopseudomonas palustris (strain BisB18) protein is Cytochrome c oxidase assembly protein CtaG.